Consider the following 109-residue polypeptide: MKGMDEYEKIINDLNTINSKAKFIGIKIIMVRRIIDMHKDNDKLIKKVLEGIKNTDLYDLVLNACPELKGERIKDVYFKKNDYFNVIKKTMSSENTVLKNVLINDESPP.

It catalyses the reaction RNA(n) + a ribonucleoside 5'-triphosphate = RNA(n+1) + diphosphate. Functionally, DNA-dependent RNA polymerase catalyzes the transcription of DNA into RNA using the four ribonucleoside triphosphates as substrates. This is DNA-directed RNA polymerase subunit I (rpoI) from Methanocaldococcus jannaschii (strain ATCC 43067 / DSM 2661 / JAL-1 / JCM 10045 / NBRC 100440) (Methanococcus jannaschii).